A 1892-amino-acid chain; its full sequence is MIFQSFLLGNLVSLCMKIINSVVVVGLYYGFLTTFSIGPSYLFLLRALVMEEGTEKKVSATTGFITGQLMMFISIYYAPLHLALGRPHTITVLALPYLLFHFFWNNHKHFFDYGSTTRNSMRNLSIQCVFLNNLIFQLFNHFILPSSMLARLVNIYLFRCNSKILFVTSGFVGWLIGHIFFMKWLGLVLVWIRQNHSIRSNKYIRSNKYLVLELRNSMARIFSILLFITCVYYLGRIPSPILTKKLKEASKTEERVESEEEKDVEIETASEMKGTKQEQEGSTEEDPYPSPSLFSEEGWDPDKIDETEEIRVNGKDKIKDKFHSHLTETGYNTSNCPIYDYEDSYLNNNNTGNPENFKLQLLDKKNENKELFWFQQPLVSLLFDYNRWNRPFRYIKNNRFEQAVRTEMSQYFFDTCKSDGKQRISFTYPPSLSTFWKMIKRRIPLLSLQKRLPNELDNQWISTNKEKSTNLNKEFLNRLEVLDKESFSLDILETRTRLCNDDTKKEYVPKMYDPLLNGPYRGTIKKEFSPSIINNTSLENLKERVRINRIHTIFLPNTDYQEFEQKVDTVDKKPLSTEIDEFLTLINEFDNEPKSSLNLKDLSLFSDQEQGRVNSEKRTKFVKFVFNAIDPNGTTSEKKLIGIKEISKKIPRWSHKLITELEQQSGDYQEGVPLDHQIRSRKAKRVVIFTANNQNNDPNTKDTDTADQDQTKEVALIRYSQQPDFRRGIIKGSMRAQRRKTVIWKLFQANVHSPLFLERITPPLLFSFDISGLIKPIFRNWSGKEGEFKILESREEQTKREEKKEKDKKGENKRKEKARIEIAEAWDTIPFAQIIRGYMLITQSILRKYIVLPSLIIAKNLGRMLFLQLPEWSEDLQEWNREMHIKCTYNGVQLSETEFPKNWLKDGIQIKILFPFCLKPWHISKLYSSRGELMKKKKQKDDFCFLTVWGMEAELPFGSPRKRPSFFEPIFKELEKKIGKFKKKYFITLKVLKGKIKLFRRVSKETKKWLIKSSLFIKKMKKELSKVNPIVLFRFKEIDESNETKKEKDSLISNQIINEPFSQIESGNWPNSSLIESKMKDLTDRTSTIKNQIERITKEKKKVTPEIDISPNKSPNKTNNIKKFESPKNIFQILKRRNTRLIWKFHYFLKFFIQRLYIDLFLSIINIPRINTQLFLESTNKLIDKYISKNEINQKKIHFISTIKKSLYNISKKNSHIFFDLSYLSQAYVFYKLSQTQVINLSKLRSVLQYNRTSFFLKTKLKDYFRTLGIFHSELKHKKLQSYRINQWKNWLRRHYQYDLSQIRWSRLMPQKRRNRVNQSCMAQNRNLNKWNSYEKDQLIHYKKENDSELYSLSNQKDNFKKCYRYDLLAYKSINYENKNDSFICRLPFQVNKNLEISSNSNTSKHNLFYMLGNLHINNYLRKGNILYIERNLDRKYFDWKIIHFSLRQKEDIEAWVKSDTNSNPNTKIGINNYQIIDKIEKKGLFYLTIHQNPENNQKNSKNDFFDWMGMNEKILNRPILNLEFWLFPEFVPFYNVYKIKPWIIPSKLLLLNLNTNENVSQNKNKKQNFFLRSNKKIKNRIQEEKEPASQGEKERGSDIENKGNLGPVLSKHQNALKKDYTESDTKKGKKKKQYKSNTEAELDLFLKRYLLFQLRWNDALNQRMIENIKVYCLLLRLINPSKIAISSIQRREMSLDIMLIQKNLTLTELMKKGILIIEPIRLSVKNNGQFIMYQTIGISLVHKSKHQTNQRYPEQRYVDKKNFDEFILQPQTQRINTDKNHFDLLVPENILWSRRRRELRIRSFFNSLNWNGVDRNSVFCNENNVKNWSQFLDERKPLYKEKNELIKLKFFLWPNYRLEDLACMNRYWFDTNNGSRFSILRIHMYPRLKIN.

6 helical membrane passes run 18–38 (IINS…FSIG), 64–84 (FITG…HLAL), 87–107 (PHTI…WNNH), 124–144 (LSIQ…HFIL), 172–192 (VGWL…LVWI), and 221–241 (IFSI…PSPI). 3 disordered regions span residues 250–300 (SKTE…EGWD), 794–814 (REEQ…ENKR), and 1581–1609 (RIQE…LGPV). Residues 256 to 268 (VESEEEKDVEIET) show a composition bias toward acidic residues. Basic and acidic residues predominate over residues 1581–1602 (RIQEEKEPASQGEKERGSDIEN).

Belongs to the TIC214 family. As to quaternary structure, part of the Tic complex.

The protein localises to the plastid. The protein resides in the chloroplast inner membrane. Its function is as follows. Involved in protein precursor import into chloroplasts. May be part of an intermediate translocation complex acting as a protein-conducting channel at the inner envelope. This Nicotiana tomentosiformis (Tobacco) protein is Protein TIC 214.